Consider the following 474-residue polypeptide: tRNA-2-methylthio-N(6)-dimethylallyladenosine synthase (474 aa).

The MTTase N-terminal domain occupies K3–I120. [4Fe-4S] cluster is bound by residues C12, C49, C83, C157, C161, and C164. A Radical SAM core domain is found at R143 to R382. Residues V381–R444 form the TRAM domain.

Belongs to the methylthiotransferase family. MiaB subfamily. In terms of assembly, monomer. Requires [4Fe-4S] cluster as cofactor.

The protein resides in the cytoplasm. The catalysed reaction is N(6)-dimethylallyladenosine(37) in tRNA + (sulfur carrier)-SH + AH2 + 2 S-adenosyl-L-methionine = 2-methylsulfanyl-N(6)-dimethylallyladenosine(37) in tRNA + (sulfur carrier)-H + 5'-deoxyadenosine + L-methionine + A + S-adenosyl-L-homocysteine + 2 H(+). Catalyzes the methylthiolation of N6-(dimethylallyl)adenosine (i(6)A), leading to the formation of 2-methylthio-N6-(dimethylallyl)adenosine (ms(2)i(6)A) at position 37 in tRNAs that read codons beginning with uridine. The sequence is that of tRNA-2-methylthio-N(6)-dimethylallyladenosine synthase from Nitrosospira multiformis (strain ATCC 25196 / NCIMB 11849 / C 71).